The following is a 488-amino-acid chain: Glutamyl-tRNA(Gln) amidotransferase subunit A (488 aa).

Residues lysine 77 and serine 152 each act as charge relay system in the active site. Residue serine 176 is the Acyl-ester intermediate of the active site.

The protein belongs to the amidase family. GatA subfamily. As to quaternary structure, heterotrimer of A, B and C subunits.

It carries out the reaction L-glutamyl-tRNA(Gln) + L-glutamine + ATP + H2O = L-glutaminyl-tRNA(Gln) + L-glutamate + ADP + phosphate + H(+). In terms of biological role, allows the formation of correctly charged Gln-tRNA(Gln) through the transamidation of misacylated Glu-tRNA(Gln) in organisms which lack glutaminyl-tRNA synthetase. The reaction takes place in the presence of glutamine and ATP through an activated gamma-phospho-Glu-tRNA(Gln). The protein is Glutamyl-tRNA(Gln) amidotransferase subunit A of Streptococcus pyogenes serotype M4 (strain MGAS10750).